A 350-amino-acid polypeptide reads, in one-letter code: S-adenosylmethionine:tRNA ribosyltransferase-isomerase (350 aa).

This sequence belongs to the QueA family. Monomer.

The protein resides in the cytoplasm. The enzyme catalyses 7-aminomethyl-7-carbaguanosine(34) in tRNA + S-adenosyl-L-methionine = epoxyqueuosine(34) in tRNA + adenine + L-methionine + 2 H(+). Its pathway is tRNA modification; tRNA-queuosine biosynthesis. Functionally, transfers and isomerizes the ribose moiety from AdoMet to the 7-aminomethyl group of 7-deazaguanine (preQ1-tRNA) to give epoxyqueuosine (oQ-tRNA). This chain is S-adenosylmethionine:tRNA ribosyltransferase-isomerase, found in Bacillus mycoides (strain KBAB4) (Bacillus weihenstephanensis).